Consider the following 202-residue polypeptide: N-(5'-phosphoribosyl)anthranilate isomerase (202 aa).

Belongs to the TrpF family.

The catalysed reaction is N-(5-phospho-beta-D-ribosyl)anthranilate = 1-(2-carboxyphenylamino)-1-deoxy-D-ribulose 5-phosphate. Its pathway is amino-acid biosynthesis; L-tryptophan biosynthesis; L-tryptophan from chorismate: step 3/5. This chain is N-(5'-phosphoribosyl)anthranilate isomerase, found in Geobacter metallireducens (strain ATCC 53774 / DSM 7210 / GS-15).